The primary structure comprises 445 residues: Coronin-A (445 aa).

WD repeat units lie at residues 77–117 (GHKS…LTDS), 127–167 (GHKR…NLTT), 170–209 (GHSDMITSCEWNHNGSQIVTTCKDKKARVFDPRTNSIVNE), and 259–299 (DSAS…PYIH). The stretch at 410 to 444 (KNEKELREEYEKLKIRVAYLESEIVKKDAKIKELT) forms a coiled coil.

It belongs to the WD repeat coronin family. Binds to F-actin.

The protein localises to the cell surface. In terms of biological role, required for normal motility. Participates in cytokinesis. This Dictyostelium discoideum (Social amoeba) protein is Coronin-A (corA).